A 210-amino-acid polypeptide reads, in one-letter code: Glutathione S-transferase P 2 (210 aa).

Residues 1–82 (SGYTLTYFPL…LLARYGLSGS (82 aa)) enclose the GST N-terminal domain. Glutathione is bound by residues Tyr-7, Arg-13, Trp-38, Lys-46, 53-54 (QI), and 66-67 (QS). One can recognise a GST C-terminal domain in the interval 83-204 (NEREIAINEM…KSEGRKRRPI (122 aa)).

Belongs to the GST superfamily. Pi family. In terms of assembly, homodimer. Liver, kidney, muscle, skin, lung and ovary.

It carries out the reaction RX + glutathione = an S-substituted glutathione + a halide anion + H(+). In terms of biological role, conjugation of reduced glutathione to a wide number of exogenous and endogenous hydrophobic electrophiles. This chain is Glutathione S-transferase P 2, found in Bufo bufo (European toad).